The chain runs to 731 residues: T-cell activation Rho GTPase-activating protein (731 aa).

Residues 88-277 enclose the Rho-GAP domain; it reads QPLSIICGDS…FLIDNCFEIF (190 aa). 3 disordered regions span residues 288 to 421, 464 to 507, and 641 to 662; these read TSDD…AEDP, SLDA…IKKH, and HHVE…GLSP. The segment covering 299-311 has biased composition (polar residues); sequence SDVSTLQNDSAYD. Over residues 319–329 the composition is skewed to low complexity; it reads SNSSSGISSPS. Residues 380–399 show a composition bias toward polar residues; the sequence is SMPSSQECLESRVTNQTLTK. Residue serine 400 is modified to Phosphoserine. The span at 464-480 shows a compositional bias: low complexity; it reads SLDASSDSSPVASPSSP. Composition is skewed to basic and acidic residues over residues 494–503 and 641–652; these read KTEKGKPSRE and HHVEDSRHRGSK.

Its function is as follows. May function as a GTPase-activating protein and may play important roles during T-cell activation. The polypeptide is T-cell activation Rho GTPase-activating protein (TAGAP) (Homo sapiens (Human)).